The sequence spans 272 residues: Neurogenin-2 (272 aa).

Residues 30–69 (LTPLSSSADEEEEEEPGASGGARRQRGAEAGQGARGGVAA) form a disordered region. Positions 112 to 164 (TRRLKANNRERNRMHNLNAALDALREVLPTFPEDAKLTKIETLRFAHNYIWAL) constitute a bHLH domain. Low complexity predominate over residues 197 to 239 (ASAALSSSGDSPSPASTWSCTNSPAPSSSVSSNSTSPYSCTLS). The segment at 197-264 (ASAALSSSGD…PPDKHRYAPH (68 aa)) is disordered.

Efficient DNA binding requires dimerization with another bHLH protein.

It localises to the nucleus. In terms of biological role, transcriptional regulator. Involved in neuronal differentiation. Activates transcription by binding to the E box (5'-CANNTG-3'). The sequence is that of Neurogenin-2 (NEUROG2) from Homo sapiens (Human).